The chain runs to 355 residues: UDP-N-acetylglucosamine--N-acetylmuramyl-(pentapeptide) pyrophosphoryl-undecaprenol N-acetylglucosamine transferase (355 aa).

UDP-N-acetyl-alpha-D-glucosamine contacts are provided by residues 13 to 15 (TGG), N125, R162, S190, I244, and Q289.

Belongs to the glycosyltransferase 28 family. MurG subfamily.

Its subcellular location is the cell inner membrane. It catalyses the reaction di-trans,octa-cis-undecaprenyl diphospho-N-acetyl-alpha-D-muramoyl-L-alanyl-D-glutamyl-meso-2,6-diaminopimeloyl-D-alanyl-D-alanine + UDP-N-acetyl-alpha-D-glucosamine = di-trans,octa-cis-undecaprenyl diphospho-[N-acetyl-alpha-D-glucosaminyl-(1-&gt;4)]-N-acetyl-alpha-D-muramoyl-L-alanyl-D-glutamyl-meso-2,6-diaminopimeloyl-D-alanyl-D-alanine + UDP + H(+). Its pathway is cell wall biogenesis; peptidoglycan biosynthesis. Its function is as follows. Cell wall formation. Catalyzes the transfer of a GlcNAc subunit on undecaprenyl-pyrophosphoryl-MurNAc-pentapeptide (lipid intermediate I) to form undecaprenyl-pyrophosphoryl-MurNAc-(pentapeptide)GlcNAc (lipid intermediate II). The polypeptide is UDP-N-acetylglucosamine--N-acetylmuramyl-(pentapeptide) pyrophosphoryl-undecaprenol N-acetylglucosamine transferase (Neisseria meningitidis serogroup B (strain ATCC BAA-335 / MC58)).